The following is a 919-amino-acid chain: Probable disease resistance protein At4g27220 (919 aa).

Coiled-coil stretches lie at residues 1–30 (MFRS…LKRS) and 74–95 (VEIL…KKIS). The NB-ARC domain maps to 121–399 (MLDKLKDCLK…AEGLLDGQHH (279 aa)). 141–148 (GMGGVGKT) provides a ligand contact to ATP. LRR repeat units follow at residues 447–468 (GEGF…QDKF), 469–492 (VSSV…VIEG), 494–516 (ETLV…FLQA), 519–540 (NLRI…FSNL), 542–564 (SLRS…ESLV), 565–587 (KLQF…EALS), 588–610 (SLRY…TILQ), and 611–635 (LSSL…EREG).

This sequence belongs to the disease resistance NB-LRR family.

Functionally, probable disease resistance protein. This is Probable disease resistance protein At4g27220 from Arabidopsis thaliana (Mouse-ear cress).